The chain runs to 80 residues: Exodeoxyribonuclease 7 small subunit (80 aa).

This sequence belongs to the XseB family. Heterooligomer composed of large and small subunits.

It localises to the cytoplasm. It carries out the reaction Exonucleolytic cleavage in either 5'- to 3'- or 3'- to 5'-direction to yield nucleoside 5'-phosphates.. Functionally, bidirectionally degrades single-stranded DNA into large acid-insoluble oligonucleotides, which are then degraded further into small acid-soluble oligonucleotides. This chain is Exodeoxyribonuclease 7 small subunit, found in Rickettsia felis (strain ATCC VR-1525 / URRWXCal2) (Rickettsia azadi).